Here is a 669-residue protein sequence, read N- to C-terminus: MIKNANIHFNHQGTPVANDFDDIYYSDDNGLAESYYVFYQQNNIDTRLQSHDQAHFVIAETGFGTGLNFLNTCQHFTDHLARQQVQKQLNYGVKRLHFIAFEKHPLSVSDLSKILTAWPELNLLSEQLISQYPINLAGCHRLEFNNGTIVLDLYFGDALESIKTMSYPRSGIVDAWFLDGFAPSKNPDMWQQSLFNAMVNISKVGATLATFTAAGFVRRGLSDAGFTMQKVKGFAHKRSMLIGTLKHTNDTQSAPSYFNHDVSPLSNVAVIGGGIASSCILYSLAKRGISSQLFCQDAAPAMGASHNVQGAVYPHLQAKNSPHSELFAHSFLYAKRLYKQLLNDGFSFDHSWCGVLQHAVKQPLVDRHENLAQQQLWPQTLMRNVTAEQGDTIAGVTTGYSGVYFEQGGWVNPPQLVNAMLSAAHCLSPYKSTFNCHIEQLKKTSNGWLLFSNGKQFGPFSDVIICAGEHSDAFAQTKALPIVGVRGQVSHVQASEQSTKLKTVLCHKGYFTPAYLDHHCMGATFEKNTKSRQVTEQDNLSNREQLLNFYGHCNFATSLGNITAAKAAVRCSFIDHLPMAGEWVEQSDYLTAFANLRLGKRYQYQALSKKQQGLHIFTGFGARALCSAPLCSEHLISSLNNEPRPLSERVSQAIHPARFIVRDLIRNKI.

Residues 1–246 (MIKNANIHFN…KRSMLIGTLK (246 aa)) are tRNA (mnm(5)s(2)U34)-methyltransferase. Residues 271–669 (IGGGIASSCI…IVRDLIRNKI (399 aa)) form an FAD-dependent cmnm(5)s(2)U34 oxidoreductase region.

This sequence in the N-terminal section; belongs to the methyltransferase superfamily. tRNA (mnm(5)s(2)U34)-methyltransferase family. It in the C-terminal section; belongs to the DAO family. FAD serves as cofactor.

The protein resides in the cytoplasm. It catalyses the reaction 5-aminomethyl-2-thiouridine(34) in tRNA + S-adenosyl-L-methionine = 5-methylaminomethyl-2-thiouridine(34) in tRNA + S-adenosyl-L-homocysteine + H(+). Catalyzes the last two steps in the biosynthesis of 5-methylaminomethyl-2-thiouridine (mnm(5)s(2)U) at the wobble position (U34) in tRNA. Catalyzes the FAD-dependent demodification of cmnm(5)s(2)U34 to nm(5)s(2)U34, followed by the transfer of a methyl group from S-adenosyl-L-methionine to nm(5)s(2)U34, to form mnm(5)s(2)U34. The polypeptide is tRNA 5-methylaminomethyl-2-thiouridine biosynthesis bifunctional protein MnmC (Pseudoalteromonas translucida (strain TAC 125)).